Reading from the N-terminus, the 1289-residue chain is Ethylene-insensitive protein 2.1 (1289 aa).

The next 5 membrane-spanning stretches (helical) occupy residues 18-38 (LLPAVGPGLLIAIGYVDPGKW), 48-68 (FGFDLVLPMLLFNFVAILCQY), 96-116 (FLGVQAALSVIALDLTMILGI), 128-148 (LSTCVSLAAAEAILFPFFATL), and 155-175 (SFLCTCIAGFILLLYFFGVLI). N185 carries an N-linked (GlcNAc...) asparagine glycan. The chain crosses the membrane as a helical span at residues 199-219 (LMSLLGASIMPHNFFLHSAIV). N227 carries N-linked (GlcNAc...) asparagine glycosylation. 7 helical membrane passes run 235–255 (LNHFFAILCIFSGIYLVNFVL), 260–280 (ANVFHSTGLVLLTFPDAMSLM), 288–308 (VAPFGFSLILFFANQITAFSW), 335–355 (IIAVVPALYCVWTSGVEGIYQ), 356–376 (LLILTQVMVALLLPSSVIPLF), 393–413 (FLEFVALISFMGMLGIKIIFV), and 439–459 (YIVLLITACSSFCLMLWLAAT). Residue N521 is glycosylated (N-linked (GlcNAc...) asparagine). Positions 611-659 (LHTEKEDDEGDNWEPEDSSKGVPGSTLSLTSDGPGSFRSLSGKSDAGGN) are disordered. Residues 616-626 (EDDEGDNWEPE) are compositionally biased toward acidic residues. Over residues 635–652 (STLSLTSDGPGSFRSLSG) the composition is skewed to polar residues. 2 positions are modified to phosphoserine: S646 and S663. The N-linked (GlcNAc...) asparagine glycan is linked to N745. Positions 792–816 (SIADSSERRYSGVRTPPSSDGWDNQ) are disordered. Residues 807 to 816 (PPSSDGWDNQ) show a composition bias toward polar residues. T819 is subject to Phosphothreonine. S923 bears the Phosphoserine mark. Residue N1025 is glycosylated (N-linked (GlcNAc...) asparagine). The segment at 1208–1227 (HRSSPPASNGMLPPASKPGR) is disordered. The short motif at 1274–1281 (LKRYKRRL) is the Nuclear localization signal element.

The protein belongs to the NRAMP (TC 2.A.55) family.

The protein localises to the endoplasmic reticulum membrane. It localises to the nucleus. Its subcellular location is the cytoplasm. Central factor in signaling pathways regulated by ethylene (ET) and involved in various processes including development, plant defense, senescence, nucleotide sugar flux, and tropisms. Its function is as follows. Trafficking signal inducing ethylene response. The nuclear localization is both necessary and sufficient to activate EIN3-mediated transcription and ethylene responses. This is Ethylene-insensitive protein 2.1 from Populus trichocarpa (Western balsam poplar).